The following is a 318-amino-acid chain: tRNA-cytidine(32) 2-sulfurtransferase (318 aa).

The short motif at 52-57 is the PP-loop motif element; sequence SGGKDS. 3 residues coordinate [4Fe-4S] cluster: cysteine 127, cysteine 130, and cysteine 218.

The protein belongs to the TtcA family. In terms of assembly, homodimer. Mg(2+) is required as a cofactor. The cofactor is [4Fe-4S] cluster.

The protein localises to the cytoplasm. It carries out the reaction cytidine(32) in tRNA + S-sulfanyl-L-cysteinyl-[cysteine desulfurase] + AH2 + ATP = 2-thiocytidine(32) in tRNA + L-cysteinyl-[cysteine desulfurase] + A + AMP + diphosphate + H(+). Its pathway is tRNA modification. Catalyzes the ATP-dependent 2-thiolation of cytidine in position 32 of tRNA, to form 2-thiocytidine (s(2)C32). The sulfur atoms are provided by the cysteine/cysteine desulfurase (IscS) system. The polypeptide is tRNA-cytidine(32) 2-sulfurtransferase (Actinobacillus pleuropneumoniae serotype 5b (strain L20)).